A 157-amino-acid polypeptide reads, in one-letter code: MFDILMYLFENYVHSEVELLVDQDELTKELTRAGFHQSEIIKALSWLERLADIQEAGTPYLCNHDQQSFRIYTKAEMEKIDVESRGFLLFLEQIKVLSVETREMVIDRVMEIDEPTLNLDDLKWVILMVLFNAPGHESAYEQMEDLIFEQPDGRLHS.

The protein belongs to the Smg family.

The protein is Protein Smg homolog of Shewanella halifaxensis (strain HAW-EB4).